The following is a 360-amino-acid chain: Peptide chain release factor 1 (360 aa).

At Gln-237 the chain carries N5-methylglutamine.

The protein belongs to the prokaryotic/mitochondrial release factor family. Methylated by PrmC. Methylation increases the termination efficiency of RF1.

It is found in the cytoplasm. Peptide chain release factor 1 directs the termination of translation in response to the peptide chain termination codons UAG and UAA. The polypeptide is Peptide chain release factor 1 (Nitrosococcus oceani (strain ATCC 19707 / BCRC 17464 / JCM 30415 / NCIMB 11848 / C-107)).